A 460-amino-acid polypeptide reads, in one-letter code: MSNRRLVIAGTGSGVPKTTLTIGLMAALKQAGYRVQGFKCGPDYIDPTYHTAVTERTSRNIDSWMLEHDMVREIVARASQDADISIMEGVMGFFDGKNPLTNEGSTAEISLITNSPVLLVVNCASMARSAAAIVKGFQQFLPEANIVGVIANRVGSEGHYKLVKAAIEQECHIPVVGYLKTNDELTIPERHLGLIPSIERGELTPFFEQLGQLVHDTIDIEKVYELALAPKIEINDPIFTKPSVPQVKIAVARDAAFNFYYEENFELLKACGAELVEFSPLKGEMVPQDADGLYIGGGFPEEFAETLAQQIDVKNSVRAAIQKGLPTLAECGGFMFLTDGIVTTDDTCYEMVGLIPGQVRMQTKLAALGYREVTGKPGNFLFKGDIQAKGHEFHYSTFYSEKEFSPAYDTKGMRGMKEEGYMNNNLIAGYTHFHFGSSTKMVENWVEQCKAAKKERRDAV.

The 193-residue stretch at 248 to 440 (KIAVARDAAF…THFHFGSSTK (193 aa)) folds into the GATase cobBQ-type domain. C331 serves as the catalytic Nucleophile.

Belongs to the CobB/CbiA family. Mg(2+) serves as cofactor.

It catalyses the reaction cob(II)yrinate + 2 L-glutamine + 2 ATP + 2 H2O = cob(II)yrinate a,c diamide + 2 L-glutamate + 2 ADP + 2 phosphate + 2 H(+). The protein operates within cofactor biosynthesis; adenosylcobalamin biosynthesis; cob(II)yrinate a,c-diamide from sirohydrochlorin (anaerobic route): step 10/10. Functionally, catalyzes the ATP-dependent amidation of the two carboxylate groups at positions a and c of cobyrinate, using either L-glutamine or ammonia as the nitrogen source. This is Cobyrinate a,c-diamide synthase from Priestia megaterium (Bacillus megaterium).